The sequence spans 121 residues: Chorion protein S15 (121 aa).

An N-terminal signal peptide occupies residues 1–18 (MKYLFVCVSLALFAYISA).

This sequence belongs to the chorion protein S15/S18 family.

The protein localises to the secreted. Its function is as follows. Chorion membrane (egg shell) protein; plays a role in protecting the egg from the environment. This Drosophila subobscura (Fruit fly) protein is Chorion protein S15 (Cp15).